The primary structure comprises 333 residues: tRNA(Ile)-lysidine synthase (333 aa).

An ATP-binding site is contributed by 33 to 38 (SGGADS).

Belongs to the tRNA(Ile)-lysidine synthase family.

It localises to the cytoplasm. It catalyses the reaction cytidine(34) in tRNA(Ile2) + L-lysine + ATP = lysidine(34) in tRNA(Ile2) + AMP + diphosphate + H(+). Ligates lysine onto the cytidine present at position 34 of the AUA codon-specific tRNA(Ile) that contains the anticodon CAU, in an ATP-dependent manner. Cytidine is converted to lysidine, thus changing the amino acid specificity of the tRNA from methionine to isoleucine. In Salinispora tropica (strain ATCC BAA-916 / DSM 44818 / JCM 13857 / NBRC 105044 / CNB-440), this protein is tRNA(Ile)-lysidine synthase.